The chain runs to 63 residues: Large ribosomal subunit protein eL37 (63 aa).

Residues Cys-20, Cys-23, Cys-35, and Cys-38 each coordinate Zn(2+). The C4-type zinc-finger motif lies at 20–38; sequence CRRCGRRAFNVKKGYCAAC.

The protein belongs to the eukaryotic ribosomal protein eL37 family. It depends on Zn(2+) as a cofactor.

Functionally, binds to the 23S rRNA. This chain is Large ribosomal subunit protein eL37, found in Thermococcus gammatolerans (strain DSM 15229 / JCM 11827 / EJ3).